Consider the following 165-residue polypeptide: Protein SprT (165 aa).

The SprT-like domain maps to 20 to 163 (EKLAQANLKL…RCVHCGEQLV (144 aa)). His-78 serves as a coordination point for Zn(2+). Glu-79 is an active-site residue. His-82 contributes to the Zn(2+) binding site.

Belongs to the SprT family. Requires Zn(2+) as cofactor.

It is found in the cytoplasm. In Shigella flexneri serotype 5b (strain 8401), this protein is Protein SprT.